We begin with the raw amino-acid sequence, 244 residues long: Thiol S-methyltransferase TMT1A (244 aa).

The interval 1–28 (MELTIFILRLAIYILTFPLYLLNFLGLW) is targeting to lipid droplets. The first 29 residues, 1-29 (MELTIFILRLAIYILTFPLYLLNFLGLWS), serve as a signal peptide directing secretion.

Belongs to the methyltransferase superfamily. In terms of assembly, (Microbial infection) Interacts with HCV non-structural protein 4B/NS4B (via C-terminal region); this interaction may promote the recruitment of NS4B in the proximity of lipid droplet. Self-associates. Interacts with SNRNP200; this interaction may promote the odontogenic differentiation. Post-translationally, methylated at lysine residues most likely by EZH2. In terms of tissue distribution, expressed in the liver.

The protein resides in the lipid droplet. Its subcellular location is the endoplasmic reticulum. The protein localises to the membrane. It is found in the microsome. It localises to the cytoplasm. The protein resides in the cytosol. It carries out the reaction a thiol + S-adenosyl-L-methionine = a methyl thioether + S-adenosyl-L-homocysteine + H(+). It catalyses the reaction an adenosine in mRNA + S-adenosyl-L-methionine = an N(6)-methyladenosine in mRNA + S-adenosyl-L-homocysteine + H(+). Its activity is regulated as follows. Inhibited by 2,3-dichloro-alpha-methylbenzylamine (DCMB). Its function is as follows. Thiol S-methyltransferase that catalyzes the transfer of a methyl group from S-adenosyl-L-methionine to alkyl and phenolic thiol-containing acceptor substrates. Together with TMT1B accounts for most of S-thiol methylation activity in the endoplasmic reticulum of hepatocytes. Able to methylate the N6 position of adenosine residues in long non-coding RNAs (lncRNAs). May facilitate lncRNAs transfer into exosomes at the tumor-stroma interface. Promotes osteogenic and odontogenic differentiation by regulating the expression of genes involved in stem cell differentiation and survival. Targeted from the endoplasmic reticulum to lipid droplets, where it recruits cellular proteins to form functional organelles. Functionally, (Microbial infection) May be involved in the assembly and release stages of hepatitis C virus (HCV) life cycle and thus play a crucial role in HCV propagation. In Homo sapiens (Human), this protein is Thiol S-methyltransferase TMT1A.